The sequence spans 142 residues: Augurin-A (142 aa).

The signal sequence occupies residues 1-28 (MLSEKFHLRLLTLLTLLTALSLTDVASE). 2 consecutive propeptides follow at residues 29-66 (SKLE…LKRP) and 127-142 (GAAS…YDYY).

Belongs to the augurin family.

Its subcellular location is the secreted. The protein localises to the cytoplasm. It is found in the apical cell membrane. Probable hormone. Required for the proper formation of the central nervous system by attenuating cell proliferation during development. In Danio rerio (Zebrafish), this protein is Augurin-A.